Here is a 154-residue protein sequence, read N- to C-terminus: Egg-lysin (154 aa).

A signal peptide spans methionine 1–serine 18.

In terms of assembly, homodimer. In terms of tissue distribution, sperm.

Its function is as follows. Dissolves the egg vitelline layer nonenzymatically during fertilization. It creates a hole of about 3 mu-m in diameter through which the sperm pass. The polypeptide is Egg-lysin (Haliotis walallensis (Flat abalone)).